The chain runs to 410 residues: Exopolygalacturonase (410 aa).

An N-terminal signal peptide occupies residues 1 to 22 (MACTNNAMRALFLLVLFCIVHG). A glycan (N-linked (GlcNAc...) asparagine) is linked at N89. PbH1 repeat units lie at residues 192–218 (CKDM…HMGD), 219–240 (SSGI…SIGP), 242–262 (TSKV…SIGS), 272–293 (VTDI…RIKA), and 337–377 (ASKV…TMDD). D233 serves as the catalytic Proton donor. Residues C235 and C252 are joined by a disulfide bond. N246 carries an N-linked (GlcNAc...) asparagine glycan. H256 is an active-site residue. The N-linked (GlcNAc...) asparagine glycan is linked to N349. C364 and C370 form a disulfide bridge. Residue N387 is glycosylated (N-linked (GlcNAc...) asparagine). C393 and C409 are joined by a disulfide.

The protein belongs to the glycosyl hydrolase 28 family. In terms of tissue distribution, pollen.

It is found in the secreted. Its subcellular location is the cell wall. It carries out the reaction [(1-&gt;4)-alpha-D-galacturonosyl](n) + H2O = alpha-D-galacturonate + [(1-&gt;4)-alpha-D-galacturonosyl](n-1). May function in depolymerizing pectin during pollen development, germination, and tube growth. Acts as an exo-polygalacturonase. The chain is Exopolygalacturonase (PG1) from Zea mays (Maize).